An 89-amino-acid chain; its full sequence is Large ribosomal subunit protein bL31B (89 aa).

Belongs to the bacterial ribosomal protein bL31 family. Type B subfamily. In terms of assembly, part of the 50S ribosomal subunit.

The polypeptide is Large ribosomal subunit protein bL31B (Actinobacillus pleuropneumoniae serotype 5b (strain L20)).